The primary structure comprises 317 residues: Pantothenate kinase (317 aa).

An ATP-binding site is contributed by 95-102 (GSVAVGKS).

This sequence belongs to the prokaryotic pantothenate kinase family.

Its subcellular location is the cytoplasm. It catalyses the reaction (R)-pantothenate + ATP = (R)-4'-phosphopantothenate + ADP + H(+). Its pathway is cofactor biosynthesis; coenzyme A biosynthesis; CoA from (R)-pantothenate: step 1/5. The sequence is that of Pantothenate kinase from Myxococcus xanthus (strain DK1622).